Consider the following 204-residue polypeptide: Putative rubrerythrin (204 aa).

Residues 1–159 (MINNFFVINM…KLLKEVEEGT (159 aa)) form the Ferritin-like diiron domain. Positions 24, 57, 107, 110, 141, 144, 171, 174, 187, and 190 each coordinate Fe(3+). One can recognise a Rubredoxin-like domain in the interval 166–204 (PVEWVCRKCGFVHLGKEPPEKCPSCSHPRKYFEVKCEKY).

In terms of assembly, homodimer. Possesses two rubredoxin-like centers and two non-sulfur oxo-bridged di-iron centers per dimer. Requires Fe(3+) as cofactor.

The protein localises to the cytoplasm. In terms of biological role, may provide oxidative stress protection via catalytic reduction of intracellular hydrogen peroxide. This Methanocaldococcus jannaschii (strain ATCC 43067 / DSM 2661 / JAL-1 / JCM 10045 / NBRC 100440) (Methanococcus jannaschii) protein is Putative rubrerythrin.